A 328-amino-acid polypeptide reads, in one-letter code: Probable cell division protein WhiA (328 aa).

A DNA-binding region (H-T-H motif) is located at residues 275-308 (SLEELGRLAEPPMTKDAVAGRIRRLLSMADKRAE).

The protein belongs to the WhiA family.

Its function is as follows. Involved in cell division and chromosome segregation. The protein is Probable cell division protein WhiA of Corynebacterium jeikeium (strain K411).